Reading from the N-terminus, the 348-residue chain is GTPase Obg (348 aa).

The region spanning 1–159 is the Obg domain; sequence MKFVDEVKVH…RELVLELKLM (159 aa). One can recognise an OBG-type G domain in the interval 160-331; it reads ADVGLVGLPN…LLSALVRILS (172 aa). Residues 166–173, 191–195, 213–216, 283–286, and 312–314 each bind GTP; these read GLPNAGKS, FTTLI, DIPG, NKVD, and SAR. Mg(2+) is bound by residues serine 173 and threonine 193.

The protein belongs to the TRAFAC class OBG-HflX-like GTPase superfamily. OBG GTPase family. As to quaternary structure, monomer. Mg(2+) serves as cofactor.

It localises to the cytoplasm. Functionally, an essential GTPase which binds GTP, GDP and possibly (p)ppGpp with moderate affinity, with high nucleotide exchange rates and a fairly low GTP hydrolysis rate. Plays a role in control of the cell cycle, stress response, ribosome biogenesis and in those bacteria that undergo differentiation, in morphogenesis control. This Syntrophobacter fumaroxidans (strain DSM 10017 / MPOB) protein is GTPase Obg.